The primary structure comprises 293 residues: Elongation factor Ts (293 aa).

Positions 79–82 (TDFV) are involved in Mg(2+) ion dislocation from EF-Tu. Phosphoserine is present on Ser-149.

It belongs to the EF-Ts family.

Its subcellular location is the cytoplasm. In terms of biological role, associates with the EF-Tu.GDP complex and induces the exchange of GDP to GTP. It remains bound to the aminoacyl-tRNA.EF-Tu.GTP complex up to the GTP hydrolysis stage on the ribosome. In Bacillus subtilis (strain 168), this protein is Elongation factor Ts (tsf).